We begin with the raw amino-acid sequence, 270 residues long: Regulatory protein RecX (270 aa).

It belongs to the RecX family.

It is found in the cytoplasm. Its function is as follows. Modulates RecA activity. In Bacillus cereus (strain B4264), this protein is Regulatory protein RecX.